Consider the following 99-residue polypeptide: MCEPISDDPQVIPQPKGPAAKALAGAVRFYQKYLSGLKMGSTCRFDPVCSTYALKSVSVHGAVKGTVLAAVRLAKCGPWHPGGFDPVPNPGYWSTETVR.

This sequence belongs to the UPF0161 family.

It localises to the cell membrane. Could be involved in insertion of integral membrane proteins into the membrane. The chain is Putative membrane protein insertion efficiency factor from Corynebacterium efficiens (strain DSM 44549 / YS-314 / AJ 12310 / JCM 11189 / NBRC 100395).